We begin with the raw amino-acid sequence, 130 residues long: Small ribosomal subunit protein uS9 (130 aa).

The interval 101-130 is disordered; the sequence is AGLLTRDARMKERKKPGLKKARKASQFSKR. A compositionally biased stretch (basic residues) spans 111 to 130; it reads KERKKPGLKKARKASQFSKR.

Belongs to the universal ribosomal protein uS9 family.

The sequence is that of Small ribosomal subunit protein uS9 from Levilactobacillus brevis (strain ATCC 367 / BCRC 12310 / CIP 105137 / JCM 1170 / LMG 11437 / NCIMB 947 / NCTC 947) (Lactobacillus brevis).